A 78-amino-acid polypeptide reads, in one-letter code: Large ribosomal subunit protein bL31 (78 aa).

The protein belongs to the bacterial ribosomal protein bL31 family. Type A subfamily. As to quaternary structure, part of the 50S ribosomal subunit.

Binds the 23S rRNA. This is Large ribosomal subunit protein bL31 (rpmE) from Rickettsia conorii (strain ATCC VR-613 / Malish 7).